The chain runs to 136 residues: Nucleoside diphosphate kinase (136 aa).

Residues Lys10, Phe58, Arg86, Thr92, Arg104, and Asn114 each contribute to the ATP site. His117 acts as the Pros-phosphohistidine intermediate in catalysis.

It belongs to the NDK family. Homohexamer. Mg(2+) is required as a cofactor.

It localises to the cytoplasm. The enzyme catalyses a 2'-deoxyribonucleoside 5'-diphosphate + ATP = a 2'-deoxyribonucleoside 5'-triphosphate + ADP. It carries out the reaction a ribonucleoside 5'-diphosphate + ATP = a ribonucleoside 5'-triphosphate + ADP. Functionally, major role in the synthesis of nucleoside triphosphates other than ATP. The ATP gamma phosphate is transferred to the NDP beta phosphate via a ping-pong mechanism, using a phosphorylated active-site intermediate. The polypeptide is Nucleoside diphosphate kinase (Mycobacterium bovis (strain ATCC BAA-935 / AF2122/97)).